A 265-amino-acid chain; its full sequence is Undecaprenyl-diphosphatase (265 aa).

The next 7 membrane-spanning stretches (helical) occupy residues 42–62 (ATTF…VLYW), 82–102 (GIML…AAHS), 108–128 (LFTP…MLLV), 143–163 (MSPA…WPGF), 181–201 (GLAA…ATGY), 221–241 (GFVV…ALVG), and 248–264 (FAWY…YFMA).

Belongs to the UppP family.

Its subcellular location is the cell inner membrane. The catalysed reaction is di-trans,octa-cis-undecaprenyl diphosphate + H2O = di-trans,octa-cis-undecaprenyl phosphate + phosphate + H(+). Catalyzes the dephosphorylation of undecaprenyl diphosphate (UPP). Confers resistance to bacitracin. This chain is Undecaprenyl-diphosphatase, found in Nitratidesulfovibrio vulgaris (strain ATCC 29579 / DSM 644 / CCUG 34227 / NCIMB 8303 / VKM B-1760 / Hildenborough) (Desulfovibrio vulgaris).